We begin with the raw amino-acid sequence, 552 residues long: uncharacterized protein (552 aa).

Positions 8 to 200 (KLFADMIIQG…LLCVYEGFLK (193 aa)) constitute a DhaL domain.

This is an uncharacterized protein from Staphylococcus haemolyticus (strain JCSC1435).